Consider the following 1546-residue polypeptide: MQDISTTTASTNYLKADGDTGAVFSITSQQQQIHYMRKQKPDHEKTREELIEEINHLRAVSNSNKNARIMLDEMYQFVALLDVNGNLLDVNEPALQGGGMIRSSIQGIPFWDCRWWATSQENIDNVREAVHKASKGEFIRYETEIFGKSAGTEKITIDFSLMPLFNDKGEVSLILPEGRNITEKRLGELEIERKNNELRSLYEKIKELDELKTQFFANVSHELRTPLALIVGPTDKLLKDENVDINVRKDLEIVARNARGLLKIVNNLLDISRLEAGKMNLNYSMVNLGQTVHLIASCFEILAREKSLDFSIITPSEPMMAAIDADKMQRVITNLISNAFKFTPSGGAVKCILEKFDLSPNKPGFQIVVSDTGPGIPDNLHEIIFERFRQVDGSSTRKHGGTGLGLSIVKEFVTLHGGTVTIHNISTGGAQFTLRLPLTPNMDEHLYKKTISDQNISEIQQQLYQQQQQEQQQQQQQQQNLQQPKLILNNIDNKYKINDDDNDDDDDDDDEDGLNFNILKKTNTSSDIASNALKDNMGSIMGVHAIAQQAVEELTEKQFYQSQENIHNKPIVLVVEDNPEMNRFIAELLSKYYFVVTAFDGVEGIEKTRAITPDLIVTDCMMPRMSGDEMVEQLRSDEQFDNIPILLLTAKADENLRIKLLQNGVSDYVNKPFSSEELVARVVNLMTMKKAKQFLQEELSSANTDLQELINQLTNKKRDLQTLVGELEKERNLLNNTNKSKDEFFMNLSHELRTPLNGILGWCQLLLYDIDSGGSSGGGSGSISGDDSTVRTGLETIERCASSQNQLINDLLDMSLIIGDKFSLILGDVDLPILIENAISSILVTAQSKKISVHSNIQGEGEEESSILRNIVGDKARLQQVIWNLLSNSIKFTKEKGRIHLNLKVVNQIPSREVLGFCSNPMFNTINRHGDRWILFTITDNGKGIPKQFLPSVFDRFKQADCSSTRSYGGLGIGLSITQNIIHLHKGAVYANSEGENKGSQFTVVLPIIKGSSSSNSSPSNQLSCSSSPPLIKKPFFSQPTNYINNNNNNNNNNNNNNNNNNNNNNNNNNNNNYNNYNNNNSNNNNNSNNNNNNNNNNNNNNNNNNNNNNNNNNNLNINNLINNNHNNNNNNYHHNNNNNNNSNNNEKLGKRQREEINNNENNNVDLRLRTPPPPPTSSISENFLVNSSNLIPSPALNPINNNNNSNNNNNNIGDIKKINLEISQIPSTNLNPKLSLVINNNNNNNNNNNSLLKTIITNAINNNINNSNNDDNSNNTTIPTPPSSAINMINSLPLPSPSPSFILPTLSPFSSPLSELKSSSNNNNNNNNNSNNNNNNSMSPNLRSPKANSNKNLLGGIQIMLVDDLEETTHLFSSMLYKLGAKRIDTFQRVSDAYAFLCDSSKPQPDIILSDLTMPFEDGYSMVRKLRDREKINTQNKKTPIIALTASVSSSDKEKVLKSGFDLHCSKPVNFLELSNSILTLIEKYNTTVNIDLIKEQEQNNNNNNNNNNNNNNNNNNNNNNINNGNDDDSLLLTDSRPCKKANSQ.

The stretch at 36-63 forms a coiled coil; the sequence is MRKQKPDHEKTREELIEEINHLRAVSNS. A PAS domain is found at 65-131; sequence KNARIMLDEM…NIDNVREAVH (67 aa). In terms of domain architecture, PAC spans 139–193; that stretch reads IRYETEIFGKSAGTEKITIDFSLMPLFNDKGEVSLILPEGRNITEKRLGELEIER. The Histidine kinase 1 domain occupies 218 to 440; sequence NVSHELRTPL…QFTLRLPLTP (223 aa). At His221 the chain carries Phosphohistidine; by autocatalysis. The Response regulatory 1 domain maps to 571 to 686; the sequence is IVLVVEDNPE…ELVARVVNLM (116 aa). Asp619 carries the 4-aspartylphosphate modification. The Histidine kinase 2 domain maps to 747–1010; that stretch reads NLSHELRTPL…QFTVVLPIIK (264 aa). His750 is subject to Phosphohistidine; by autocatalysis. Low complexity-rich tracts occupy residues 1013–1031 and 1042–1146; these read SSSN…SPPL and NYIN…SNNN. Disordered regions lie at residues 1013 to 1148, 1266 to 1285, and 1313 to 1350; these read SSSN…NNEK, NNSN…PPSS, and PLSE…KANS. Positions 1313–1346 are enriched in low complexity; it reads PLSELKSSSNNNNNNNNNSNNNNNNSMSPNLRSP. The Response regulatory 2 domain maps to 1359-1483; it reads QIMLVDDLEE…ELSNSILTLI (125 aa). Residue Asp1412 is modified to 4-aspartylphosphate. Residues 1500-1546 are disordered; the sequence is QNNNNNNNNNNNNNNNNNNNNNNINNGNDDDSLLLTDSRPCKKANSQ. Over residues 1501 to 1526 the composition is skewed to low complexity; it reads NNNNNNNNNNNNNNNNNNNNNNINNG.

The enzyme catalyses ATP + protein L-histidine = ADP + protein N-phospho-L-histidine.. In terms of biological role, acts as a receptor histidine kinase for a signal transduction pathway. This protein undergoes an ATP-dependent autophosphorylation at a conserved histidine residue in the kinase core, and a phosphoryl group is then transferred to a conserved aspartate residue in the receiver domain. In Dictyostelium discoideum (Social amoeba), this protein is Hybrid signal transduction histidine kinase D (dhkD).